Here is a 314-residue protein sequence, read N- to C-terminus: 4-hydroxy-3-methylbut-2-enyl diphosphate reductase (314 aa).

Cys12 is a binding site for [4Fe-4S] cluster. (2E)-4-hydroxy-3-methylbut-2-enyl diphosphate contacts are provided by His41 and His74. 2 residues coordinate dimethylallyl diphosphate: His41 and His74. Residues His41 and His74 each contribute to the isopentenyl diphosphate site. Cys96 contributes to the [4Fe-4S] cluster binding site. His124 serves as a coordination point for (2E)-4-hydroxy-3-methylbut-2-enyl diphosphate. His124 provides a ligand contact to dimethylallyl diphosphate. An isopentenyl diphosphate-binding site is contributed by His124. The Proton donor role is filled by Glu126. Thr168 contributes to the (2E)-4-hydroxy-3-methylbut-2-enyl diphosphate binding site. Cys198 lines the [4Fe-4S] cluster pocket. (2E)-4-hydroxy-3-methylbut-2-enyl diphosphate-binding residues include Ser226, Ser227, Asn228, and Ser270. 4 residues coordinate dimethylallyl diphosphate: Ser226, Ser227, Asn228, and Ser270. Isopentenyl diphosphate contacts are provided by Ser226, Ser227, Asn228, and Ser270.

It belongs to the IspH family. [4Fe-4S] cluster is required as a cofactor.

It catalyses the reaction isopentenyl diphosphate + 2 oxidized [2Fe-2S]-[ferredoxin] + H2O = (2E)-4-hydroxy-3-methylbut-2-enyl diphosphate + 2 reduced [2Fe-2S]-[ferredoxin] + 2 H(+). The catalysed reaction is dimethylallyl diphosphate + 2 oxidized [2Fe-2S]-[ferredoxin] + H2O = (2E)-4-hydroxy-3-methylbut-2-enyl diphosphate + 2 reduced [2Fe-2S]-[ferredoxin] + 2 H(+). Its pathway is isoprenoid biosynthesis; dimethylallyl diphosphate biosynthesis; dimethylallyl diphosphate from (2E)-4-hydroxy-3-methylbutenyl diphosphate: step 1/1. It functions in the pathway isoprenoid biosynthesis; isopentenyl diphosphate biosynthesis via DXP pathway; isopentenyl diphosphate from 1-deoxy-D-xylulose 5-phosphate: step 6/6. In terms of biological role, catalyzes the conversion of 1-hydroxy-2-methyl-2-(E)-butenyl 4-diphosphate (HMBPP) into a mixture of isopentenyl diphosphate (IPP) and dimethylallyl diphosphate (DMAPP). Acts in the terminal step of the DOXP/MEP pathway for isoprenoid precursor biosynthesis. This Pseudomonas fluorescens (strain Pf0-1) protein is 4-hydroxy-3-methylbut-2-enyl diphosphate reductase.